The primary structure comprises 331 residues: Phenylalanine--tRNA ligase alpha subunit (331 aa).

Residue Glu252 participates in Mg(2+) binding.

The protein belongs to the class-II aminoacyl-tRNA synthetase family. Phe-tRNA synthetase alpha subunit type 1 subfamily. In terms of assembly, tetramer of two alpha and two beta subunits. Mg(2+) serves as cofactor.

The protein resides in the cytoplasm. It catalyses the reaction tRNA(Phe) + L-phenylalanine + ATP = L-phenylalanyl-tRNA(Phe) + AMP + diphosphate + H(+). The chain is Phenylalanine--tRNA ligase alpha subunit from Marinomonas sp. (strain MWYL1).